The primary structure comprises 358 residues: Mesaconyl-CoA hydratase (358 aa).

Residues 44–148 (AHDPGLRLTH…TSSSRPQYGI (105 aa)) form the MaoC-like domain.

It belongs to the enoyl-CoA hydratase/isomerase family.

The catalysed reaction is (2R,3S)-beta-methylmalyl-CoA = 2-methylfumaryl-CoA + H2O. Functionally, involved in the methylaspartate cycle. Catalyzes the reversible hydration of mesaconyl-CoA (2-methylfumaryl-CoA) to yield beta-methylmalyl-CoA ((2R,3S)-beta-methylmalyl-CoA). This is Mesaconyl-CoA hydratase from Haloarcula marismortui (strain ATCC 43049 / DSM 3752 / JCM 8966 / VKM B-1809) (Halobacterium marismortui).